The following is a 250-amino-acid chain: GTP cyclohydrolase 1 (250 aa).

2 stretches are compositionally biased toward basic and acidic residues: residues 1-14 and 35-44; these read MEKGPVRAPAEKPR and PAEKPPRPEA. Residues 1 to 64 form a disordered region; sequence MEKGPVRAPA…GERPRSEEDN (64 aa). Phosphoserine is present on residues Ser60 and Ser81. Positions 141, 144, and 212 each coordinate Zn(2+).

It belongs to the GTP cyclohydrolase I family. Toroid-shaped homodecamer, composed of a dimer of pentamers. The inactive isoforms also form decamers and may possibly be incorporated into GCH1 heterodecamers, decreasing enzyme stability and activity. Interacts with AHSA1 and GCHFR/GFRP. Phosphorylated by casein kinase II at Ser-81 in HAECs during oscillatory shear stress; phosphorylation at Ser-81 results in increased enzyme activity. In epidermis, expressed predominantly in basal undifferentiated keratinocytes and in some but not all melanocytes (at protein level).

The protein resides in the cytoplasm. It is found in the nucleus. It catalyses the reaction GTP + H2O = 7,8-dihydroneopterin 3'-triphosphate + formate + H(+). Its pathway is cofactor biosynthesis; 7,8-dihydroneopterin triphosphate biosynthesis; 7,8-dihydroneopterin triphosphate from GTP: step 1/1. GTP shows a positive allosteric effect, and tetrahydrobiopterin inhibits the enzyme activity. Zinc is required for catalytic activity. Inhibited by Mg(2+). Positively regulates nitric oxide synthesis in umbilical vein endothelial cells (HUVECs). May be involved in dopamine synthesis. May modify pain sensitivity and persistence. Isoform GCH-1 is the functional enzyme, the potential function of the enzymatically inactive isoforms remains unknown. The protein is GTP cyclohydrolase 1 (GCH1) of Homo sapiens (Human).